Reading from the N-terminus, the 745-residue chain is Copper-transporting ATPase (745 aa).

Residues 1 to 67 (MKESFYIEGM…LIEKLGYSPK (67 aa)) enclose the HMA domain. Topologically, residues 1-83 (MKESFYIEGM…KKEFFSPNVK (83 aa)) are cytoplasmic. 2 residues coordinate Cu cation: C12 and C15. A helical transmembrane segment spans residues 84–104 (LALAVIFTLFVVYLSMGAMLS). Residues 105–124 (PSLLPESLLAINNHSNFLNA) lie on the Extracellular side of the membrane. The helical transmembrane segment at 125–144 (CLQLIGALIVMHLGRDFYIQ) threads the bilayer. Over 145–151 (GFKALWH) the chain is Cytoplasmic. A helical transmembrane segment spans residues 152–172 (RQPNMSSLIAIGTSAALISSL). Residues 173-194 (WQLYLVYTNHYTDQWSYGHYYF) lie on the Extracellular side of the membrane. Residues 195-215 (ESVCVILMFVMVGKRIENVSK) form a helical membrane-spanning segment. Residues 216–343 (DKALDAMQAL…KAEISRLADK (128 aa)) are Cytoplasmic-facing. Residues 344–366 (VSSVFVPSVIAIAILAFVVWLII) traverse the membrane as a helical segment. Residues 367–379 (APKPDFWWNFGIA) lie on the Extracellular side of the membrane. Residues 380 to 397 (LEVFVSVLVISCPCALGL) form a helical membrane-spanning segment. The Cytoplasmic segment spans residues 398 to 685 (ATPMSILVAN…KLSQATIKNI (288 aa)). D435 serves as the catalytic 4-aspartylphosphate intermediate. D631 and D635 together coordinate Mg(2+). Residues 686 to 705 (KENLFWAFCYNSVFIPLACG) form a helical membrane-spanning segment. Residues 706–716 (VLYKANIMLSP) are Extracellular-facing. A helical membrane pass occupies residues 717 to 735 (AIAGLAMSLSSVSVVLNSQ). At 736–745 (RLRNFKIKDH) the chain is on the cytoplasmic side.

This sequence belongs to the cation transport ATPase (P-type) (TC 3.A.3) family. Type IB subfamily.

The protein resides in the cell membrane. The catalysed reaction is Cu(2+)(in) + ATP + H2O = Cu(2+)(out) + ADP + phosphate + H(+). Functionally, probably involved in copper export. In Helicobacter pylori (Campylobacter pylori), this protein is Copper-transporting ATPase (copA).